Consider the following 1872-residue polypeptide: MEDSDLSITNIRDFLTELPKLAKCEYSETTSYLLWKTLNLRLKHSDNDINWRSLVSILNSEAWENEKYRDILNGRKWRTLEFENDHHSVGNMHIGTACTRLCFPSETIYYCFTCSTNPLYEICELCFDKEKHVNHSYVAKVVMRPEGRICHCGDPFAFNDPSDAFKCKNELNNIPISNDNSNVTDDENVISLLNYVLDFLIDVTVSYKEEAEAHSSERKASSLMHPNQNSITDDIMEKHECEPLVNDENFVFFDNNWSNTRKEAHMEWAIQIEEEECNVHYMDLASTITRILNTPVEYAISITKALEDSHDVVTVLQSENFFEIDQIAKEFQKENIVVHVRKADDIFKRKLTDDLTDWLYSLCFKAATSLQNKYALRISMLDVWYSHFSKMRVSPTNTNPDFSKINLLGGFLISNEDSDESWFKPWSLENIEDERISKILTNYNERLIRAHSPNTVSHFYNFYGSRFQYIIINSINILSKKSKFKMLKIMASLFSLRDESRKFLAAQYIDVYLSVLYDAVASDAKECQVTLMSILGQYTFQDPSIANMTISSGFIERTIRFAFTLMAFNPEDLMSYLPISLYNGFKLPTETIRNRRTIICFKDLCTIMSANTVPEELLSNEAIFNAIIESFSEFSNVLPLKRETKEHVEVENFDFSAFYFFFSSILIMTDGYTRSISLVKDAAFRKQIVLKLLDVAQTREFESLTNSRKAISPDNASTNENDSNKATLSTVRETICNYVAETINFQVGVNTQYFFNPMSYLFKFVIQWSQCGRYEPIPASLTNYINLFEVFQDKQKALYISESALSTLVLIGQINVGFWVRNGTPITHQARMYTKYSMREFTYISDIFNVQFSMAMCNPDELMVTYLSRWGLKHWANGVPMYDYPDTETTVAVVNECILLLIQLLTEVRSLVMKSSKEGFERTFKSEIIHALCFDTCSYAQIVNCIPEHITKHPSFDIYLEKYANYTSPVSLTDNGIFVLKEKYKDEIDPYYIGLSSSRRYDVEKNIRLNMANLKKMKYEDTFVPAKKVKDLLKNTLFSGLYSISSVNTFGLFLKNTLDHIIKYDYDNLLPRVVHLIHLCVVNNLNEFMGILWHEYAIVDTEFCHYHSIGSILYYCLLKDNFSESHGKIREIFRYLMETAPHVNVNSYLREQTTSYTPGILWPTKEDKSHKDKEFERKKHLARLRKKKLMKKLAQQQMKFMENNSVDTSDISTPRTTSPSLSPTRINAENSSNTINSCCDDDCVFCKMPKDDDVFVYFSYQERNICDHGIDFTNPTDVNRINSLFSGKQTKDSAIQENPQDDDGTRLKFTSCEPVLRACGHGSHTKCLSGHMKSIRGIQNQTTKNIPLSYGSGLIYCPVCNSLSNSFLPKTNDIDKRTSSQFFMCIEKRSEAEENLDPMSSICIKAAMILGDLQGKKVTTIEDAYKVVNSVFINTISNTELRLRSHKKEGKIVNMERISSQCILTLHLVCELKSFIYKKFVNSKTFSSEISRKIWNWNEFLIKGNNVNLLLYMSQNFDNIDGGKTPQPPNLCIYEMFKRRFHQLLLLLARDMMRVNFYKDCRNKIKISSNGSEEPSTSFSYLFNTFKKYVDLFKPDDVRFDFTSLEKIKDFICSLLLESLSIFCRRTFLLFNIQYDDDGDGDNNNNRSNNFMDVKQREIELIFRYFKLPNLTHFLKDFFYNELTQNIERYNDGNDNLRIQQVIYDMVQNINTRAYPSPEHIQLIELPLNLSKFSLDNDEISNKCDKYEIAVCLLCGQKCHIQKSIALQGYLQGECTDHMRNGCEITSAYGVFLMTGTNAIYLSYGKRGTFYAAPYLSKYGETNEDYKFGTPVYLNRARYANLANEIVFGNMIPHIVFRLTDGSADLGGWETM.

The UBR-type zinc finger occupies 96-172; the sequence is TACTRLCFPS…DAFKCKNELN (77 aa). Lys709 participates in a covalent cross-link: Glycyl lysine isopeptide (Lys-Gly) (interchain with G-Cter in ubiquitin). Positions 1134 to 1240 are interaction with UBC2; sequence RYLMETAPHV…SSNTINSCCD (107 aa). The interval 1203–1227 is disordered; that stretch reads NNSVDTSDISTPRTTSPSLSPTRIN. Residues 1212–1225 are compositionally biased toward low complexity; that stretch reads STPRTTSPSLSPTR. Phosphoserine occurs at positions 1218 and 1222. Residues 1241–1362 form an RING-type; atypical zinc finger; that stretch reads DDCVFCKMPK…GLIYCPVCNS (122 aa).

This sequence belongs to the E3 ubiquitin-protein ligase UBR1-like family. In terms of assembly, interacts with MUB1, RPN4 and UBC2.

It localises to the cytoplasm. It catalyses the reaction S-ubiquitinyl-[E2 ubiquitin-conjugating enzyme]-L-cysteine + [acceptor protein]-L-lysine = [E2 ubiquitin-conjugating enzyme]-L-cysteine + N(6)-ubiquitinyl-[acceptor protein]-L-lysine.. It functions in the pathway protein modification; protein ubiquitination. E3 ubiquitin-protein ligase which probably functions outside the N-end rule pathway, since it lacks the residues essential for the degradation of N-end rule substrates. Mediates RPN4 ubiquitination and subsequent degradation. In Saccharomyces cerevisiae (strain ATCC 204508 / S288c) (Baker's yeast), this protein is E3 ubiquitin-protein ligase UBR2 (UBR2).